The primary structure comprises 382 residues: C-type lectin domain-containing protein 38 (382 aa).

Over 1-40 (MAIFYDDPLERLNQPIKTKSYRKKQVVQRVHVFIFDNWKL) the chain is Cytoplasmic. A helical transmembrane segment spans residues 41 to 61 (ILLGILNLIFLIIAIVFAILF). The Extracellular segment spans residues 62–382 (FVGSADCAQL…FFLCKRAIDF (321 aa)). A disordered region spans residues 97–116 (NAITTTQGTPSNKTSTTTPS). Over residues 100–116 (TTTQGTPSNKTSTTTPS) the composition is skewed to low complexity. Asn-108 and Asn-189 each carry an N-linked (GlcNAc...) asparagine glycan. C-type lectin domains lie at 129-250 (VGTK…FVCE) and 264-377 (YNKN…FLCK). Intrachain disulfides connect Cys-150–Cys-249, Cys-223–Cys-241, Cys-285–Cys-376, and Cys-348–Cys-368.

As to expression, expressed in ventral cord motor neurons and PLM touch neurons.

It is found in the membrane. Functionally, involved in negative modulation of unc-40-mediated axon outgrowth. Required for proper presynaptic development in axons that have reached their targets. May function in concert with E3 ubiquitin-protein ligase rpm-1 in regulating axon outgrowth. This Caenorhabditis elegans protein is C-type lectin domain-containing protein 38.